The chain runs to 121 residues: UPF0102 protein Strop_1320 (121 aa).

The protein belongs to the UPF0102 family.

The sequence is that of UPF0102 protein Strop_1320 from Salinispora tropica (strain ATCC BAA-916 / DSM 44818 / JCM 13857 / NBRC 105044 / CNB-440).